The chain runs to 215 residues: MOB kinase activator-like 1B (215 aa).

The interval 1-25 (MSLFGLGRNQKTFRPKKSAPSGTKG) is disordered. Positions 79, 84, 161, and 166 each coordinate Zn(2+).

It belongs to the MOB1/phocein family. Interacts with SIK1. In terms of tissue distribution, expression is detected along the vasculature in cotyledons, hypocotyls and roots of 3- to 4-day-old seedlings.

This Arabidopsis thaliana (Mouse-ear cress) protein is MOB kinase activator-like 1B.